We begin with the raw amino-acid sequence, 540 residues long: 2-isopropylmalate synthase (540 aa).

The 266-residue stretch at 8–273 (VLIFDTTLRD…FFGRDQDSPT (266 aa)) folds into the Pyruvate carboxyltransferase domain. Mn(2+) is bound by residues Asp-17, His-208, His-210, and Asn-244. A regulatory domain region spans residues 408-540 (QLQLVQVSCG…AVVLDARPTL (133 aa)).

The protein belongs to the alpha-IPM synthase/homocitrate synthase family. LeuA type 1 subfamily. As to quaternary structure, homodimer. Mn(2+) serves as cofactor.

The protein resides in the cytoplasm. The enzyme catalyses 3-methyl-2-oxobutanoate + acetyl-CoA + H2O = (2S)-2-isopropylmalate + CoA + H(+). It participates in amino-acid biosynthesis; L-leucine biosynthesis; L-leucine from 3-methyl-2-oxobutanoate: step 1/4. Catalyzes the condensation of the acetyl group of acetyl-CoA with 3-methyl-2-oxobutanoate (2-ketoisovalerate) to form 3-carboxy-3-hydroxy-4-methylpentanoate (2-isopropylmalate). This chain is 2-isopropylmalate synthase, found in Parasynechococcus marenigrum (strain WH8102).